We begin with the raw amino-acid sequence, 148 residues long: Large ribosomal subunit protein eL19 (148 aa).

Positions 52–76 (KPKKGISSYRSKKIAQQKKKGRRRG) are enriched in basic residues. The interval 52-95 (KPKKGISSYRSKKIAQQKKKGRRRGPGSIKGAKGARRPKKDEWM) is disordered.

It belongs to the eukaryotic ribosomal protein eL19 family. In terms of assembly, part of the 50S ribosomal subunit.

Functionally, binds to the 23S rRNA. In Methanothermobacter thermautotrophicus (strain ATCC 29096 / DSM 1053 / JCM 10044 / NBRC 100330 / Delta H) (Methanobacterium thermoautotrophicum), this protein is Large ribosomal subunit protein eL19.